A 101-amino-acid chain; its full sequence is MIPGELLPQDGDLELNAGRPTVTVTVANTGDRPVQIGSHYHFYEVNDALRFDREAARGFRLNIAAGTAVRFEPGQERTVELVALAGDRVVYGFAGRVMGKL.

It belongs to the urease beta subunit family. As to quaternary structure, heterotrimer of UreA (gamma), UreB (beta) and UreC (alpha) subunits. Three heterotrimers associate to form the active enzyme.

It localises to the cytoplasm. The enzyme catalyses urea + 2 H2O + H(+) = hydrogencarbonate + 2 NH4(+). Its pathway is nitrogen metabolism; urea degradation; CO(2) and NH(3) from urea (urease route): step 1/1. This is Urease subunit beta from Ralstonia pickettii (strain 12J).